The chain runs to 513 residues: Ferulic acid decarboxylase 1 (513 aa).

Mn(2+) contacts are provided by Asn174, His197, and Glu240. Residues 174–179, 196–197, and Glu240 contribute to the prenylated FMN site; these read NWSIAR and QH. Residue Glu289 is the Proton donor of the active site. Residue Lys405 coordinates prenylated FMN.

The protein belongs to the UbiD family. UbiD-like/FDC subfamily. In terms of assembly, homodimer. May form higher order oligomers. Mn(2+) is required as a cofactor. The cofactor is prenylated FMN.

The protein resides in the cytoplasm. It carries out the reaction (E)-4-coumarate + H(+) = 4-vinylphenol + CO2. The catalysed reaction is (E)-cinnamate + H(+) = styrene + CO2. It catalyses the reaction (E)-ferulate + H(+) = 2-methoxy-4-vinylphenol + CO2. Catalyzes the reversible decarboxylation of aromatic carboxylic acids like ferulic acid, p-coumaric acid or cinnamic acid, producing the corresponding vinyl derivatives 4-vinylphenol, 4-vinylguaiacol, and styrene, respectively, which play the role of aroma metabolites. This chain is Ferulic acid decarboxylase 1, found in Candida dubliniensis (strain CD36 / ATCC MYA-646 / CBS 7987 / NCPF 3949 / NRRL Y-17841) (Yeast).